Reading from the N-terminus, the 243-residue chain is Protein VERNALIZATION 1 (243 aa).

An MADS-box domain is found at 1–61 (MGRGKVQLKR…GKLYEFATDS (61 aa)). The K-box domain occupies 88–178 (QGNWCHEYRK…QKELVEKQKA (91 aa)). A coiled-coil region spans residues 122 to 178 (LKELQQLEQQLESSLKHIRSRKNQLMHESISELQRKERSLQEENKALQKELVEKQKA). The disordered stretch occupies residues 173–243 (VEKQKAHTQQ…PPWMVSHISG (71 aa)). Positions 179-192 (HTQQAQWEQTHPQT) are enriched in polar residues.

The protein resides in the nucleus. Functionally, component of a grass-specific mechanism of vernalization, a process by which prolonged cold exposure provides competence to flower in daylengths longer than 12 hours. Involved in the exit of vernalization and confers flowering competency at the expense of freezing tolerance, probably by promoting the expression of VRN3; this process is essential in cv. Bd29-1 for flowering but seems do not occur in cv. Bd21. This is Protein VERNALIZATION 1 from Brachypodium distachyon (Purple false brome).